Reading from the N-terminus, the 396-residue chain is L-lactate dehydrogenase (396 aa).

In terms of domain architecture, FMN hydroxy acid dehydrogenase spans 1-380; it reads MIISAASDYR…TQDSLVQGLG (380 aa). Position 24 (Tyr-24) interacts with substrate. Residues Ser-106 and Gln-127 each coordinate FMN. Tyr-129 provides a ligand contact to substrate. An FMN-binding site is contributed by Thr-155. Arg-164 contacts substrate. Lys-251 contributes to the FMN binding site. The active-site Proton acceptor is His-275. Residue Arg-278 participates in substrate binding. 306–330 serves as a coordination point for FMN; that stretch reads DSGIRNGLDVVRMIALGADTVLLGR.

Belongs to the FMN-dependent alpha-hydroxy acid dehydrogenase family. FMN is required as a cofactor.

The protein localises to the cell inner membrane. It catalyses the reaction (S)-lactate + A = pyruvate + AH2. In terms of biological role, catalyzes the conversion of L-lactate to pyruvate. Is coupled to the respiratory chain. This chain is L-lactate dehydrogenase, found in Shigella boydii serotype 18 (strain CDC 3083-94 / BS512).